The chain runs to 582 residues: MVTERSARESPEQRAAEQVVLVVDDDEDLADTCRYWLDGERFAVETAYGGEEALHRLDDTVDVVLLDRRMPNVTGDDVLEEIRERGLDCRVAMMTAVEPDTDIVEMPFDAYLVKPVSESEVKETVEELLVRSGFESGVREYFALESTEAALDSRDVEELREPEALSDLRSRLEAVRAEHEAAIRNREAQLDRLNRTNELLRDVDRALIDARTRDEIEQTVCDVVADAHEAAVVLRRTAAGTLRCTAAAGHGLDPAGVDLDFVDEAFGVDGAAEDGFVFEDIPGAHRAAVLGDDADDLDAVSALCVSIDYRETMYGALVVYDETDGFDDESAGLFSDLGATVGNGINATQSKRLLNGDSVVELEFQVGRDAGVLARLSAALDCQLSLDGVTRLDDGLACFISVAGASGCDAVAAAIDAVDVSQARVVADGDEESVVELRTDAEAVLSTAIDHGASVERLTLSEGSGTLTLHVAADADHGALVEAVTTAAAGVSVVAKREVERSVQSADSFRRALDSKLTDRQRTVLETSLVSGYFEWPRGSTAEEVADSLGISPPTLHEHLRTAERKLIETYFDELNQAPADD.

One can recognise a Response regulatory domain in the interval 19-129 (VVLVVDDDED…EVKETVEELL (111 aa)). Asp67 is subject to 4-aspartylphosphate. Residues 165–203 (LSDLRSRLEAVRAEHEAAIRNREAQLDRLNRTNELLRDV) are a coiled coil. The 53-residue stretch at 517–569 (LTDRQRTVLETSLVSGYFEWPRGSTAEEVADSLGISPPTLHEHLRTAERKLIE) folds into the HTH bat-type domain.

In terms of biological role, may be part of a signal-dependent gene regulation cascade that is relevant to swimming motility. May be involved in the transcription regulation of target genes. This is Putative transcriptional regulator HVO_1357 from Haloferax volcanii (strain ATCC 29605 / DSM 3757 / JCM 8879 / NBRC 14742 / NCIMB 2012 / VKM B-1768 / DS2) (Halobacterium volcanii).